Reading from the N-terminus, the 687-residue chain is Polyphosphate kinase (687 aa).

ATP is bound at residue asparagine 45. Arginine 375 and arginine 405 together coordinate Mg(2+). Residue histidine 435 is the Phosphohistidine intermediate of the active site. Positions 472, 568, and 596 each coordinate ATP.

This sequence belongs to the polyphosphate kinase 1 (PPK1) family. Requires Mg(2+) as cofactor. Post-translationally, an intermediate of this reaction is the autophosphorylated ppk in which a phosphate is covalently linked to a histidine residue through a N-P bond.

It catalyses the reaction [phosphate](n) + ATP = [phosphate](n+1) + ADP. In terms of biological role, catalyzes the reversible transfer of the terminal phosphate of ATP to form a long-chain polyphosphate (polyP). The chain is Polyphosphate kinase from Burkholderia cenocepacia (strain HI2424).